A 251-amino-acid polypeptide reads, in one-letter code: Imidazole glycerol phosphate synthase subunit HisF (251 aa).

Catalysis depends on residues Asp-11 and Asp-130.

This sequence belongs to the HisA/HisF family. Heterodimer of HisH and HisF.

Its subcellular location is the cytoplasm. The catalysed reaction is 5-[(5-phospho-1-deoxy-D-ribulos-1-ylimino)methylamino]-1-(5-phospho-beta-D-ribosyl)imidazole-4-carboxamide + L-glutamine = D-erythro-1-(imidazol-4-yl)glycerol 3-phosphate + 5-amino-1-(5-phospho-beta-D-ribosyl)imidazole-4-carboxamide + L-glutamate + H(+). Its pathway is amino-acid biosynthesis; L-histidine biosynthesis; L-histidine from 5-phospho-alpha-D-ribose 1-diphosphate: step 5/9. Its function is as follows. IGPS catalyzes the conversion of PRFAR and glutamine to IGP, AICAR and glutamate. The HisF subunit catalyzes the cyclization activity that produces IGP and AICAR from PRFAR using the ammonia provided by the HisH subunit. The polypeptide is Imidazole glycerol phosphate synthase subunit HisF (Chloroherpeton thalassium (strain ATCC 35110 / GB-78)).